The primary structure comprises 142 residues: Transcriptional regulator MraZ (142 aa).

2 SpoVT-AbrB domains span residues 5–51 (ASAL…PRPE) and 77–120 (AMDV…DSQT).

Belongs to the MraZ family. Forms oligomers.

It is found in the cytoplasm. Its subcellular location is the nucleoid. The chain is Transcriptional regulator MraZ from Burkholderia cenocepacia (strain ATCC BAA-245 / DSM 16553 / LMG 16656 / NCTC 13227 / J2315 / CF5610) (Burkholderia cepacia (strain J2315)).